The chain runs to 242 residues: ATP synthase subunit a (242 aa).

The next 6 helical transmembrane spans lie at 29-49, 84-104, 114-134, 140-160, 181-201, and 203-223; these read SSIY…LAFY, FIPL…LGMT, IIVT…VGFV, FLTL…MIVI, MAGH…MIYL, and FLPI…AILQ.

It belongs to the ATPase A chain family. F-type ATPases have 2 components, CF(1) - the catalytic core - and CF(0) - the membrane proton channel. CF(1) has five subunits: alpha(3), beta(3), gamma(1), delta(1), epsilon(1). CF(0) has three main subunits: a(1), b(2) and c(9-12). The alpha and beta chains form an alternating ring which encloses part of the gamma chain. CF(1) is attached to CF(0) by a central stalk formed by the gamma and epsilon chains, while a peripheral stalk is formed by the delta and b chains.

It localises to the cell inner membrane. Its function is as follows. Key component of the proton channel; it plays a direct role in the translocation of protons across the membrane. The protein is ATP synthase subunit a of Rickettsia rickettsii (strain Sheila Smith).